A 269-amino-acid chain; its full sequence is uncharacterized protein (269 aa).

The segment at 1-22 (MSANGTDQQSDHGHSTSNNKDC) is disordered.

This is an uncharacterized protein from Gallus gallus (Chicken).